Reading from the N-terminus, the 82-residue chain is Large ribosomal subunit protein bL31B (82 aa).

Belongs to the bacterial ribosomal protein bL31 family. Type B subfamily. Part of the 50S ribosomal subunit.

This Amoebophilus asiaticus (strain 5a2) protein is Large ribosomal subunit protein bL31B.